The sequence spans 145 residues: Fluoride-specific ion channel FluC 2 (145 aa).

4 helical membrane-spanning segments follow: residues 16–36, 42–62, 80–100, and 113–133; these read MLLVFVGGALGTAARALLSAA, VISVITFVINVIGAFVLGWLL, LFAGTGVLGGFTTYSAFAVDT, and ILYAAATIAIGAAAYLAGIAL. The Na(+) site is built by Gly88 and Thr91.

This sequence belongs to the fluoride channel Fluc/FEX (TC 1.A.43) family.

It is found in the cell membrane. It carries out the reaction fluoride(in) = fluoride(out). Its activity is regulated as follows. Na(+) is not transported, but it plays an essential structural role and its presence is essential for fluoride channel function. In terms of biological role, fluoride-specific ion channel. Important for reducing fluoride concentration in the cell, thus reducing its toxicity. The protein is Fluoride-specific ion channel FluC 2 of Leifsonia xyli subsp. xyli (strain CTCB07).